Here is a 356-residue protein sequence, read N- to C-terminus: UDP-3-O-acylglucosamine N-acyltransferase (356 aa).

The active-site Proton acceptor is the His-242.

Belongs to the transferase hexapeptide repeat family. LpxD subfamily. As to quaternary structure, homotrimer.

It carries out the reaction a UDP-3-O-[(3R)-3-hydroxyacyl]-alpha-D-glucosamine + a (3R)-hydroxyacyl-[ACP] = a UDP-2-N,3-O-bis[(3R)-3-hydroxyacyl]-alpha-D-glucosamine + holo-[ACP] + H(+). It functions in the pathway bacterial outer membrane biogenesis; LPS lipid A biosynthesis. Catalyzes the N-acylation of UDP-3-O-acylglucosamine using 3-hydroxyacyl-ACP as the acyl donor. Is involved in the biosynthesis of lipid A, a phosphorylated glycolipid that anchors the lipopolysaccharide to the outer membrane of the cell. In Acinetobacter baumannii (strain AB0057), this protein is UDP-3-O-acylglucosamine N-acyltransferase.